The chain runs to 372 residues: uncharacterized protein (372 aa).

S-adenosyl-L-methionine is bound by residues Asp-202 and 227 to 229 (GDF).

Belongs to the class I-like SAM-binding methyltransferase superfamily. Cation-independent O-methyltransferase family.

This is an uncharacterized protein from Methanocaldococcus jannaschii (strain ATCC 43067 / DSM 2661 / JAL-1 / JCM 10045 / NBRC 100440) (Methanococcus jannaschii).